The primary structure comprises 205 residues: MTEWLISNQFTDYNHSVKFMEAKIQQIYNNLSDELVWLLQHPPLYTAGIGATDDDIIEKLFPIYKTGRGGKYTYHGPGQRIIYLMLNLKKRNKCDIKLYIRDLSNWIINVLKHFNILGEFKEDRIGIWVNNKGVEEKIAAFGIRLRKWVTYHGIALNVSPNLSHYEGIIPCGLKDYGVTSMEKLGVKVSLCELDDILKQEFHKIF.

The BPL/LPL catalytic domain occupies 30–205 (NLSDELVWLL…ILKQEFHKIF (176 aa)). Residues 68 to 75 (RGGKYTYH), 140 to 142 (AFG), and 153 to 155 (GIA) each bind substrate. Cysteine 171 serves as the catalytic Acyl-thioester intermediate.

It belongs to the LipB family.

Its subcellular location is the cytoplasm. It carries out the reaction octanoyl-[ACP] + L-lysyl-[protein] = N(6)-octanoyl-L-lysyl-[protein] + holo-[ACP] + H(+). Its pathway is protein modification; protein lipoylation via endogenous pathway; protein N(6)-(lipoyl)lysine from octanoyl-[acyl-carrier-protein]: step 1/2. Functionally, catalyzes the transfer of endogenously produced octanoic acid from octanoyl-acyl-carrier-protein onto the lipoyl domains of lipoate-dependent enzymes. Lipoyl-ACP can also act as a substrate although octanoyl-ACP is likely to be the physiological substrate. The polypeptide is Octanoyltransferase (Wolbachia pipientis subsp. Culex pipiens (strain wPip)).